A 138-amino-acid chain; its full sequence is uncharacterized protein (138 aa).

3 consecutive transmembrane segments (helical) span residues 12 to 32, 62 to 82, and 111 to 131; these read LHFLGFIGGIFAILGVIVLPI, LIAVPLFVLGYFISTIDFSVL, and FHWVASLPAWFITTVCALICS.

It is found in the cell membrane. This is an uncharacterized protein from Haemophilus influenzae (strain ATCC 51907 / DSM 11121 / KW20 / Rd).